The chain runs to 342 residues: N-acetyl-gamma-glutamyl-phosphate reductase (342 aa).

Cysteine 149 is a catalytic residue.

It belongs to the NAGSA dehydrogenase family. Type 1 subfamily.

It is found in the cytoplasm. It catalyses the reaction N-acetyl-L-glutamate 5-semialdehyde + phosphate + NADP(+) = N-acetyl-L-glutamyl 5-phosphate + NADPH + H(+). Its pathway is amino-acid biosynthesis; L-arginine biosynthesis; N(2)-acetyl-L-ornithine from L-glutamate: step 3/4. In terms of biological role, catalyzes the NADPH-dependent reduction of N-acetyl-5-glutamyl phosphate to yield N-acetyl-L-glutamate 5-semialdehyde. This Thiobacillus denitrificans (strain ATCC 25259 / T1) protein is N-acetyl-gamma-glutamyl-phosphate reductase.